We begin with the raw amino-acid sequence, 510 residues long: Protein disulfide-isomerase (510 aa).

A signal peptide spans 1-20; it reads MLRRALLCLALTALFRAGAG. Positions 27 to 136 constitute a Thioredoxin 1 domain; the sequence is HVLVLHKGNF…IVNWLKKRTG (110 aa). Residues Cys-55 and Cys-58 each act as nucleophile in the active site. Residues Cys-55 and Cys-58 are joined by a disulfide bond. N6-acetyllysine is present on Lys-202. N6-succinyllysine is present on residues Lys-224 and Lys-273. Residues Ser-333 and Ser-359 each carry the phosphoserine modification. A Thioredoxin 2 domain is found at 351 to 477; the sequence is GKIKPHLMSQ…FKKFLESGGQ (127 aa). Catalysis depends on nucleophile residues Cys-399 and Cys-402. Cys-399 and Cys-402 are disulfide-bonded. At Ser-429 the chain carries Phosphoserine. The segment at 473–510 is disordered; it reads ESGGQDGAGDDDDLEDLEEAEEPDLEEDDDQKAVKDEL. Positions 480–502 are enriched in acidic residues; the sequence is AGDDDDLEDLEEAEEPDLEEDDD. The Prevents secretion from ER signature appears at 507–510; it reads KDEL.

It belongs to the protein disulfide isomerase family. As to quaternary structure, heterodimer; heterodimerizes with the protein microsomal triglyceride transfer MTTP. Homodimer. Monomers and homotetramers may also occur. Interacts with P4HA2, forming a heterotetramer consisting of 2 alpha subunits (P4HA2) and 2 beta (P4HB), where P4HB plays the role of a structural subunit; this tetramer catalyzes the formation of 4-hydroxyproline in collagen. Also constitutes the structural subunit of the microsomal triacylglycerol transfer protein MTTP in mammalian cells. Stabilizes both enzymes and retain them in the ER without contributing to the catalytic activity. Binds UBQLN1. Interacts with ERO1B. Interacts with ILDR2. Interacts with ERN1/IRE1A (via N-terminus); the interaction is enhanced by phosphorylation of P4HB by FAM20C in response to endoplasmic reticulum stress and results in attenuation of ERN1 activity. Post-translationally, phosphorylation of Ser-359 by FAM20C is induced by endoplasmic reticulum stress and results in a functional switch from oxidoreductase to molecular chaperone. It also promotes interaction with ERN1.

It is found in the endoplasmic reticulum. The protein resides in the endoplasmic reticulum lumen. It localises to the melanosome. Its subcellular location is the cell membrane. It catalyses the reaction Catalyzes the rearrangement of -S-S- bonds in proteins.. Its function is as follows. This multifunctional protein catalyzes the formation, breakage and rearrangement of disulfide bonds. At the cell surface, seems to act as a reductase that cleaves disulfide bonds of proteins attached to the cell. May therefore cause structural modifications of exofacial proteins. Inside the cell, seems to form/rearrange disulfide bonds of nascent proteins. At high concentrations and following phosphorylation by FAM20C, functions as a chaperone that inhibits aggregation of misfolded proteins. At low concentrations, facilitates aggregation (anti-chaperone activity). May be involved with other chaperones in the structural modification of the TG precursor in hormone biogenesis. Also acts as a structural subunit of various enzymes such as prolyl 4-hydroxylase and microsomal triacylglycerol transfer protein MTTP. Receptor for LGALS9; the interaction retains P4HB at the cell surface of Th2 T helper cells, increasing disulfide reductase activity at the plasma membrane, altering the plasma membrane redox state and enhancing cell migration. The polypeptide is Protein disulfide-isomerase (P4HB) (Bos taurus (Bovine)).